Here is a 131-residue protein sequence, read N- to C-terminus: Ribonuclease VapC30 (131 aa).

The PINc domain occupies 1–129 (MVIDTSALVA…FQHTDIATVA (129 aa)). Positions 4 and 99 each coordinate Mg(2+).

It belongs to the PINc/VapC protein family. It depends on Mg(2+) as a cofactor.

Its function is as follows. Toxic component of a type II toxin-antitoxin (TA) system. An RNase. Its toxic effect is neutralized by coexpression with cognate antitoxin VapB30. The sequence is that of Ribonuclease VapC30 from Mycobacterium tuberculosis (strain CDC 1551 / Oshkosh).